A 623-amino-acid polypeptide reads, in one-letter code: Zinc finger protein 143 (623 aa).

C2H2-type zinc fingers lie at residues 230 to 254 (FRCE…ERSH), 260 to 284 (YICD…VRTH), 290 to 314 (YRCQ…TRTH), 320 to 344 (FKCP…IRTH), 350 to 374 (YYCA…MRIH), 380 to 404 (YVCT…HVVH), and 410 to 433 (YNCN…RTAH).

This sequence belongs to the GLI C2H2-type zinc-finger protein family.

The protein localises to the nucleus. Transcriptional activator. Activates the gene for selenocysteine tRNA (tRNAsec). Binds to the activator element (AE) motif of the selenocysteine tRNA gene promoter. The sequence is that of Zinc finger protein 143 (znf143) from Danio rerio (Zebrafish).